The primary structure comprises 200 residues: MAEERGEKRGRRRDRENPRDRDDESSELVDKLVGINRVAKTVKGGKNFGFAALVVVGDQKGRAGFGKGKAREVPEAIRKATEEAKRNLVRIPLREGRTLHHDGNGRHGAGKVVLRAAPPGTGVIAGGPMRAVMEVLGVQDVVGKSLGSSNPYNMVRATFDALKGQANPRTVASKRGLKVQDIVGRRTDGASEAGMADSVN.

Over residues 1 to 22 the composition is skewed to basic and acidic residues; it reads MAEERGEKRGRRRDRENPRDRD. The segment at 1 to 26 is disordered; sequence MAEERGEKRGRRRDRENPRDRDDESS. Residues 28–91 form the S5 DRBM domain; it reads LVDKLVGINR…EEAKRNLVRI (64 aa).

Belongs to the universal ribosomal protein uS5 family. In terms of assembly, part of the 30S ribosomal subunit. Contacts proteins S4 and S8.

In terms of biological role, with S4 and S12 plays an important role in translational accuracy. Located at the back of the 30S subunit body where it stabilizes the conformation of the head with respect to the body. This Hyphomonas neptunium (strain ATCC 15444) protein is Small ribosomal subunit protein uS5.